The chain runs to 139 residues: Large ribosomal subunit protein uL16 (139 aa).

Belongs to the universal ribosomal protein uL16 family. As to quaternary structure, part of the 50S ribosomal subunit.

Binds 23S rRNA and is also seen to make contacts with the A and possibly P site tRNAs. This Parvibaculum lavamentivorans (strain DS-1 / DSM 13023 / NCIMB 13966) protein is Large ribosomal subunit protein uL16.